A 101-amino-acid chain; its full sequence is uncharacterized protein (101 aa).

2 helical membrane passes run 52-72 (VVFIIVFLTGWAAKSIIVKLL) and 75-95 (LWRLSTLIPSFFASFFMSLLG).

It localises to the endoplasmic reticulum membrane. This is an uncharacterized protein from Schizosaccharomyces pombe (strain 972 / ATCC 24843) (Fission yeast).